A 1308-amino-acid polypeptide reads, in one-letter code: Tau-tubulin kinase 1 (1308 aa).

The Protein kinase domain maps to 34–297 (WKVLKKIGGG…LIMSVFENSM (264 aa)). ATP contacts are provided by residues 40-48 (IGGGGFGEI) and lysine 63. The active-site Proton acceptor is aspartate 154. Disordered regions lie at residues 364-397 (LSDQ…GPEA), 418-448 (PCVE…PVRS), 474-671 (ERRS…APPF), 720-899 (QVPL…AGGG), 985-1085 (EMES…LARL), and 1097-1308 (RLAS…PGAR). Residue serine 441 is modified to Phosphoserine. The span at 485 to 496 (PSRQACSSQPAQ) shows a compositional bias: polar residues. The residue at position 541 (serine 541) is a Phosphoserine. Composition is skewed to basic and acidic residues over residues 541-555 (SKEW…ELKD) and 574-589 (ELRP…RRLG). A compositionally biased stretch (low complexity) spans 638–647 (SPSHSPLHSG). Acidic residues predominate over residues 735–769 (GEEEEEEEEEEEEEEEEEEEEEEEEEEEEEEEEEA). Residues 786–795 (GSERSTERSQ) are compositionally biased toward basic and acidic residues. Composition is skewed to polar residues over residues 868–885 (PTGS…SSIL) and 1020–1035 (ASQQ…TISP). Positions 1097 to 1107 (RLASGASSSSS) are enriched in low complexity.

It belongs to the protein kinase superfamily. CK1 Ser/Thr protein kinase family. Mg(2+) serves as cofactor. The cofactor is Mn(2+). Expressed in the brain. Strong expression in the cortical layers, the CA1 layers of the hippocampus and the granular layer of the cerebellum. Also expressed in the large cortical pyramidal cells in the temporal cortex, the CA1 pyramidal neurons and the cerebellum granular neurons.

The protein resides in the cytoplasm. It catalyses the reaction L-seryl-[protein] + ATP = O-phospho-L-seryl-[protein] + ADP + H(+). The catalysed reaction is L-threonyl-[protein] + ATP = O-phospho-L-threonyl-[protein] + ADP + H(+). Functionally, serine/threonine kinase which is able to phosphorylate TAU on serine, threonine and tyrosine residues. Induces aggregation of TAU. The polypeptide is Tau-tubulin kinase 1 (Ttbk1) (Mus musculus (Mouse)).